A 409-amino-acid chain; its full sequence is DEP domain-containing mTOR-interacting protein (409 aa).

Met-1 carries the N-acetylmethionine modification. Positions 1-25 (MEEGGSTGSAGSDSSTSGSGGAQQR) are disordered. 2 DEP domains span residues 36 to 119 (TGEQ…RFRK) and 145 to 219 (SPEN…QFRM). The short motif at 217–235 (FRMNFRRRRRLMELLNEKS) is the DDEX motif element. Phosphoserine; by MAPK3 is present on Ser-235. Thr-241 bears the Phosphothreonine mark. A phosphoserine mark is found at Ser-244 and Ser-258. Residue Thr-259 is modified to Phosphothreonine. A phosphoserine mark is found at Ser-263, Ser-265, Ser-280, Ser-282, and Ser-283. Phosphoserine; by CK1 occurs at positions 286 and 287. Residues 286–291 (SSGYFS) carry the BetaTrCP degron motif motif. A Phosphotyrosine; by SYK modification is found at Tyr-289. Ser-291 is subject to Phosphoserine; by CK1. Ser-293 is subject to Phosphoserine; by MTOR. Position 295 is a phosphothreonine; by MTOR (Thr-295). A phosphoserine mark is found at Ser-297 and Ser-298. Position 299 is a phosphoserine; by MTOR (Ser-299). Positions 330 to 407 (TFTIVGDAVG…TIVMEVMEEL (78 aa)) constitute a PDZ domain.

As to quaternary structure, associated component of the mechanistic target of rapamycin complex 1 (mTORC1) which contains MTOR, MLST8 and RPTOR. Associated component of the mechanistic target of rapamycin complex 2 (mTORC2) which contains MTOR, MLST8, PROTOR1, RICTOR, MAPKAP1 and DEPTOR. Interacts (via PDZ domain) with MTOR; interacts with MTOR within both mTORC1 and mTORC2. Interacts (via PDZ domain) with MINAR1 (via N-terminus). Interacts with SIK3. Phosphorylation weakens interaction with MTOR within mTORC1 and mTORC2. Phosphorylated at Ser-286, Ser-287 and Ser-291 in response to mitogenic stimulation by MTOR: DEPTOR is either directly phosphorylated by MTOR or indirectly via proteins kinases that are activated by MTOR, such as CK1/CSNK1A1. Phosphorylation at Ser-286, Ser-287 and Ser-291 promotes ubiquitination by the SCF(BTRC) complex, followed by degradation. Phosphorylation at Ser-235 by MAPK3/ERK1 promotes deubiquitination by USP7, enhancing its stability. Phosphorylation at Tyr-289 by SYK impairs its interaction with MTOR, promoting mTORC1 and mTORC2 signaling. In terms of processing, ubiquitinated; leading to proteasomal degradation. Ubiquitination by the SCF(BTRC) and SCF(FBXW11) complexes following phosphorylation at Ser-286, Ser-287 and Ser-291 by MTOR, leads to its degradation by the proteasome. Deubiquitinated by OTUB1 in response to amino acid via a non-canonical mechanism, leading to DEPTOR stability. Deubiquitinated by USP7 following phosphorylation at Ser-235, promoting its stability.

The protein resides in the lysosome membrane. With respect to regulation, inhibited upon phosphatidic acid-binding: phosphatidic acid produced upon mitogenic stimulation promotes DEPTOR dissociatiom from the mTORC1 and mTORC2 complexes, leading to their activation. Specifically binds unsaturated phosphatidic acid, such as 16:0-18:1, 18:0-18:1 and di-18:1. Inhibited when nutrients are present via a feedback loop: phosphorylation by MTOR promotes DEPTOR ubiquitination and degradation. In terms of biological role, negative regulator of the mTORC1 and mTORC2 complexes: inhibits the protein kinase activity of MTOR, thereby inactivating both complexes. DEPTOR inhibits mTORC1 and mTORC2 to induce autophagy. In contrast to AKT1S1/PRAS40, only partially inhibits mTORC1 activity. The polypeptide is DEP domain-containing mTOR-interacting protein (Homo sapiens (Human)).